A 92-amino-acid chain; its full sequence is Large ribosomal subunit protein eL31 (92 aa).

This sequence belongs to the eukaryotic ribosomal protein eL31 family.

This is Large ribosomal subunit protein eL31 from Halobacterium salinarum (strain ATCC 29341 / DSM 671 / R1).